A 64-amino-acid chain; its full sequence is MLFRTYIHRYVHTKALRFLRFNPIKGRSLMAHIRRTRHIMMPSYRSCFSYSLFASQNKPSNRAL.

The Ornithine recognition loop signature appears at 32-38 (HIRRTRH). An L-ornithine-binding site is contributed by arginine 35.

The protein belongs to the speF operon leader peptide family. Binds ornithine in stalled 70S ribosomes, blocking the upper two-thirds of the exit tunnel. Contacts 23S rRNA and ribosomal proteins L4 and L22.

In terms of biological role, a small protein (arrest peptide) encoded upstream of inducible ornithine carboxylase gene (speF) that controls expression of downstream genes (usually speF and potE) by transcriptional and translational attenuation. The chain is Leader peptide SpeFL from Haemophilus influenzae (strain ATCC 51907 / DSM 11121 / KW20 / Rd).